The chain runs to 578 residues: Proline--tRNA ligase (578 aa).

This sequence belongs to the class-II aminoacyl-tRNA synthetase family. ProS type 1 subfamily. As to quaternary structure, homodimer.

The protein localises to the cytoplasm. The enzyme catalyses tRNA(Pro) + L-proline + ATP = L-prolyl-tRNA(Pro) + AMP + diphosphate. Its function is as follows. Catalyzes the attachment of proline to tRNA(Pro) in a two-step reaction: proline is first activated by ATP to form Pro-AMP and then transferred to the acceptor end of tRNA(Pro). As ProRS can inadvertently accommodate and process non-cognate amino acids such as alanine and cysteine, to avoid such errors it has two additional distinct editing activities against alanine. One activity is designated as 'pretransfer' editing and involves the tRNA(Pro)-independent hydrolysis of activated Ala-AMP. The other activity is designated 'posttransfer' editing and involves deacylation of mischarged Ala-tRNA(Pro). The misacylated Cys-tRNA(Pro) is not edited by ProRS. The sequence is that of Proline--tRNA ligase from Paraburkholderia phymatum (strain DSM 17167 / CIP 108236 / LMG 21445 / STM815) (Burkholderia phymatum).